The sequence spans 139 residues: MNWNQIIFISLIATVLILAIANEAESAAVRTDKSDIKREDGENMKKRIFMQESEATAFLKRRGRRSTKSKDEVNAENRQRLAADERRREYYEEQRNEFENYVEEERDEQQERNREKTEQWREYHYDGLYPSYQYNRHHI.

The first 26 residues, 1 to 26 (MNWNQIIFISLIATVLILAIANEAES), serve as a signal peptide directing secretion. Residues 27–65 (AAVRTDKSDIKREDGENMKKRIFMQESEATAFLKRRGRR) constitute a propeptide, ucma-N. The interval 60-117 (KRRGRRSTKSKDEVNAENRQRLAADERRREYYEEQRNEFENYVEEERDEQQERNREKT) is disordered. Residues 68 to 98 (KSKDEVNAENRQRLAADERRREYYEEQRNEF) are compositionally biased toward basic and acidic residues. Residues 70–123 (KDEVNAENRQRLAADERRREYYEEQRNEFENYVEEERDEQQERNREKTEQWREY) adopt a coiled-coil conformation. A 4-carboxyglutamate mark is found at E72, E76, E85, E89, E92, E93, E97, E99, E103, E104, E105, E108, E111, E115, E118, and E122.

The protein belongs to the UCMA family. In terms of processing, proteolytically cleaved by a furin-like convertase to generate a persistent C-terminal fragment found in almost the entire cartilage matrix, and affecting osteoblast differentiation. Sulfated on tyrosine residues. In terms of tissue distribution, detected in all tissues tested: heart, liver, kidney, muscle, gonads, brain, ganoid plate, anterior kidney, spleen, spine, cleithrum, head plate, operculum, skull, mandibula, branchial arches, anterior vertebra, and posterior vertebra. Expression is highest in the cartilaginous tissues (skull, mandibula, branchial arches, anterior vertebra and posterior vertebra), with the highest levels found in posterior vertebra. Found in mature and immature chondrocytes within the vertebra and mandibula, and in the chordoblast layer of the notochord in vertebra.

Its subcellular location is the secreted. The protein resides in the extracellular space. The protein localises to the extracellular matrix. Its function is as follows. May be involved in the negative control of osteogenic differentiation of osteochondrogenic precursor cells in peripheral zones of fetal cartilage and at the cartilage-bone interface. The chain is Unique cartilage matrix-associated protein (ucma) from Acipenser naccarii (Adriatic sturgeon).